The primary structure comprises 164 residues: MRPTLLRLANASGPLPLSVSQASVQLIPPIPLYRRLLRAHRLLPVDMRYMGDSYVKSEFRLTRTTDNPLHIIGFLSQWKMYLDEIESSLIRPDGRKQGQAVEWRGKKLDTGAFEKLSTEQVGQLYELMHATKDVWKSPEQIEREANSAGVSPVNPNDPTTAGNS.

The transit peptide at 1–51 (MRPTLLRLANASGPLPLSVSQASVQLIPPIPLYRRLLRAHRLLPVDMRYMG) directs the protein to the mitochondrion. Over residues 136-145 (KSPEQIEREA) the composition is skewed to basic and acidic residues. Residues 136–164 (KSPEQIEREANSAGVSPVNPNDPTTAGNS) form a disordered region. Residues 153 to 164 (VNPNDPTTAGNS) are compositionally biased toward polar residues.

This sequence belongs to the complex I LYR family. SDHAF3 subfamily. In terms of assembly, interacts with the iron-sulfur protein subunit within the SDH catalytic dimer.

It localises to the mitochondrion matrix. Plays an essential role in the assembly of succinate dehydrogenase (SDH), an enzyme complex (also referred to as respiratory complex II) that is a component of both the tricarboxylic acid (TCA) cycle and the mitochondrial electron transport chain, and which couples the oxidation of succinate to fumarate with the reduction of ubiquinone (coenzyme Q) to ubiquinol. Promotes maturation of the iron-sulfur protein subunit of the SDH catalytic dimer, protecting it from the deleterious effects of oxidants. May act together with SDHAF1. In Cryptococcus neoformans var. neoformans serotype D (strain B-3501A) (Filobasidiella neoformans), this protein is Succinate dehydrogenase assembly factor 3, mitochondrial.